Here is a 429-residue protein sequence, read N- to C-terminus: Transcription factor IIIA (429 aa).

A disordered region spans residues 1–45 (MGGEVLNNEGMPLAELKQETIPISRSESSESLNSLTSTRSSSSNR). Positions 24–44 (SRSESSESLNSLTSTRSSSSN) are enriched in low complexity. 9 consecutive C2H2-type zinc fingers follow at residues 49–74 (YFCDYDGCDKAFTRPSILTEHQLSVH), 80–102 (FQCDKCAKSFVKKSHLERHLYTH), 108–130 (FQCSYCGKGVTTRQQLKRHEVTH), 134–159 (FICPEEGCNLRFYKHPQLRAHILSVH), 163–186 (LTCPHCNKSFQRPYRLRNHISKHH), 194–219 (YQCTFAGCCKEFRIWSQLQSHIKNDH), 222–244 (LKCPICSKPCVGENGLQMHMIIH), 253–277 (WKCHICPDMSFSRKHDLLTHYGSIH), and 365–389 (YRCFYNNCSRTFKTKEKYEKHIDKH). Residues 406–416 (KTLVDQNHKEP) are compositionally biased toward basic and acidic residues. The disordered stretch occupies residues 406–429 (KTLVDQNHKEPFIIQKETQSAGDK).

It localises to the nucleus. Interacts with the internal control region (ICR) of approximately 50 bases within the 5S RNA genes, is required for correct transcription of these genes by RNA polymerase III. Also binds the transcribed 5S RNA's. In Saccharomyces cerevisiae (strain ATCC 204508 / S288c) (Baker's yeast), this protein is Transcription factor IIIA (PZF1).